A 125-amino-acid polypeptide reads, in one-letter code: Large ribosomal subunit protein bL12 (125 aa).

The protein belongs to the bacterial ribosomal protein bL12 family. In terms of assembly, homodimer. Part of the ribosomal stalk of the 50S ribosomal subunit. Forms a multimeric L10(L12)X complex, where L10 forms an elongated spine to which 2 to 4 L12 dimers bind in a sequential fashion. Binds GTP-bound translation factors.

Functionally, forms part of the ribosomal stalk which helps the ribosome interact with GTP-bound translation factors. Is thus essential for accurate translation. This Sphingopyxis alaskensis (strain DSM 13593 / LMG 18877 / RB2256) (Sphingomonas alaskensis) protein is Large ribosomal subunit protein bL12.